Reading from the N-terminus, the 619-residue chain is Alpha-L-arabinofuranosidase C (619 aa).

Positions 1–37 are cleaved as a signal peptide; the sequence is MINHNKTPNILAKVFKRTCGLVSTGAALAILSQAASA. In terms of domain architecture, CBM2 spans 38-136; it reads ACTYTIDSEW…TVTGAACNSA (99 aa). A disulfide bond links cysteine 39 and cysteine 133. Residues 163 to 289 enclose the CBM6 domain; the sequence is LLQEAQAGFC…LPNIDSLSVV (127 aa). The segment at 300–319 is disordered; the sequence is SVSSSSSVQSSSSSSSTPSQ.

It belongs to the glycosyl hydrolase 62 family.

The protein resides in the secreted. The enzyme catalyses Hydrolysis of terminal non-reducing alpha-L-arabinofuranoside residues in alpha-L-arabinosides.. The protein operates within glycan metabolism; hemicellulose degradation. Its function is as follows. Xylanase C contributes to hydrolyze hemicellulose, the major component of plant cell-walls. This is Alpha-L-arabinofuranosidase C (xynC) from Cellvibrio japonicus (strain Ueda107) (Pseudomonas fluorescens subsp. cellulosa).